We begin with the raw amino-acid sequence, 390 residues long: Oxysterol-binding protein 10 (390 aa).

This sequence belongs to the OSBP family.

In Dictyostelium discoideum (Social amoeba), this protein is Oxysterol-binding protein 10 (osbJ).